A 538-amino-acid chain; its full sequence is Eukaryotic translation initiation factor 3 subunit L (538 aa).

The PCI domain maps to 305–513 (TFSDILLYIQ…IHIADTKVSH (209 aa)).

It belongs to the eIF-3 subunit L family. As to quaternary structure, component of the eukaryotic translation initiation factor 3 (eIF-3) complex. The eIF-3 complex interacts with pix.

It is found in the cytoplasm. Its function is as follows. Component of the eukaryotic translation initiation factor 3 (eIF-3) complex, which is involved in protein synthesis of a specialized repertoire of mRNAs and, together with other initiation factors, stimulates binding of mRNA and methionyl-tRNAi to the 40S ribosome. The eIF-3 complex specifically targets and initiates translation of a subset of mRNAs involved in cell proliferation. This chain is Eukaryotic translation initiation factor 3 subunit L, found in Drosophila mojavensis (Fruit fly).